We begin with the raw amino-acid sequence, 939 residues long: Intimin (939 aa).

An N-terminal signal peptide occupies residues M1–G41. The segment at N40–T153 is peptidoglycan-binding. The tract at residues N40–T153 is sufficient for homodimerization. Residues N40–T212 are required for periplasmic localization. The LysM domain maps to L63–L112. The tract at residues D189–L430 is inverse autotransporter. The tract at residues L402–F411 is signature sequence for beta-barrel assembly machinery (BAM), which recognizes the unfolded beta-barrel in the periplasm. Big-1 domains lie at V560 to V653 and I660 to F751. The segment at F750–K939 is required and sufficient for interaction with intimin receptor Tir. The C-type lectin domain stretch occupies residues L842 to K939. Positions L842–K939 are intimin receptor Tir-binding. C860 and C937 are disulfide-bonded.

It belongs to the intimin/invasin family. Homodimer. Interacts with Tir.

It is found in the cell outer membrane. An inverse autotransporter. Adhesin, which mediates attachment to the human intestine epithelial cells. Necessary for the production of attaching and effacing lesions on infected human tissue culture cells. Anchored to the outer membrane by binding to peptidoglycan (PGN) via its periplasmic domain, thus helping in receptor interactions during host invasion. PGN-binding may also aid in resisting mechanical and chemical stress during transit of the bacterium through the gastrointestinal tract of the host. Periplasmic domain binds purified E.coli PGN sacculi under acidic conditions in vitro and in vivo, but does not bind to chitin. Periplasmic domain binds PGN sacculi with an apparent dissociation constant (Kd) of 0.8 uM. No binding to PGN in vitro at normal physiological pH 7.4. The sequence is that of Intimin from Escherichia coli O127:H6 (strain E2348/69 / EPEC).